A 1427-amino-acid polypeptide reads, in one-letter code: DNA-directed RNA polymerase subunit beta' (1427 aa).

Residues Cys-70, Cys-72, Cys-85, and Cys-88 each contribute to the Zn(2+) site. The Mg(2+) site is built by Asp-461, Asp-463, and Asp-465. Zn(2+) contacts are provided by Cys-809, Cys-882, Cys-889, and Cys-892. A disordered region spans residues 1394 to 1427; that stretch reads EAAIGDDPLGKVQGEDFTTDDVMVEERPEGASEE. Positions 1417–1427 are enriched in basic and acidic residues; that stretch reads VEERPEGASEE.

The protein belongs to the RNA polymerase beta' chain family. The RNAP catalytic core consists of 2 alpha, 1 beta, 1 beta' and 1 omega subunit. When a sigma factor is associated with the core the holoenzyme is formed, which can initiate transcription. Mg(2+) is required as a cofactor. Requires Zn(2+) as cofactor.

The catalysed reaction is RNA(n) + a ribonucleoside 5'-triphosphate = RNA(n+1) + diphosphate. Functionally, DNA-dependent RNA polymerase catalyzes the transcription of DNA into RNA using the four ribonucleoside triphosphates as substrates. This is DNA-directed RNA polymerase subunit beta' from Sphingopyxis alaskensis (strain DSM 13593 / LMG 18877 / RB2256) (Sphingomonas alaskensis).